The following is a 1440-amino-acid chain: Pentatricopeptide repeat-containing protein At3g18110, chloroplastic (1440 aa).

The N-terminal 44 residues, 1–44 (MAVSAGALAFPALSVRATLNPEIKDEQANISSTTSSSQKFTYSR), are a transit peptide targeting the chloroplast. The span at 63-72 (TPSQTLSSPV) shows a compositional bias: polar residues. Residues 63 to 84 (TPSQTLSSPVSPIAGTPDSGDV) form a disordered region. PPR repeat units follow at residues 224–258 (RVQVYNAMMGVYSRSGKFSKAQELVDAMRQRGCVP), 259–295 (DLISFNTLINARLKSGGLTPNLAVELLDMVRNSGLRP), 296–330 (DAITYNTLLSACSRDSNLDGAVKVFEDMEAHRCQP), 331–365 (DLWTYNAMISVYGRCGLAAEAERLFMELELKGFFP), 366–400 (DAVTYNSLLYAFARERNTEKVKEVYQQMQKMGFGK), 401–431 (DEMTYNTIIHMYGKQGQLDLALQLYKDMKGL), 437–471 (DAITYTVLIDSLGKANRTVEAAALMSEMLDVGIKP), 472–506 (TLQTYSALICGYAKAGKREEAEDTFSCMLRSGTKP), 507–541 (DNLAYSVMLDVLLRGNETRKAWGLYRDMISDGHTP), 542–572 (SYTLYELMILGLMKENRSDDIQKTIRDMEEL), 608–638 (ENDTLLSILGSYSSSGRHSEAFELLEFLKEH), 643–678 (KRLITEALIVLHCKVNNLSAALDEYFADPCVHGWCF), 680–714 (SSTMYETLLHCCVANEHYAEASQVFSDLRLSGCEA), 715–749 (SESVCKSMVVVYCKLGFPETAHQVVNQAETKGFHF), 751–785 (CSPMYTDIIEAYGKQKLWQKAESVVGNLRQSGRTP), 786–820 (DLKTWNSLMSAYAQCGCYERARAIFNTMMRDGPSP), 821–855 (TVESINILLHALCVDGRLEELYVVVEELQDMGFKI), 856–890 (SKSSILLMLDAFARAGNIFEVKKIYSSMKAAGYLP), 891–925 (TIRLYRMMIELLCKGKRVRDAEIMVSEMEEANFKV), 926–960 (ELAIWNSMLKMYTAIEDYKKTVQVYQRIKETGLEP), 961–995 (DETTYNTLIIMYCRDRRPEEGYLLMQQMRNLGLDP), 996–1030 (KLDTYKSLISAFGKQKCLEQAEQLFEELLSKGLKL), 1031–1065 (DRSFYHTMMKISRDSGSDSKAEKLLQMMKNAGIEP), 1066–1100 (TLATMHLLMVSYSSSGNPQEAEKVLSNLKDTEVEL), and 1101–1135 (TTLPYSSVIDAYLRSKDYNSGIERLLEMKKEGLEP). Positions 1419–1440 (KKKKMGNETNGINTRRKFVRSK) are disordered.

This sequence belongs to the PPR family. P subfamily.

The protein resides in the plastid. It localises to the chloroplast. May play a role in embryogenesis. This Arabidopsis thaliana (Mouse-ear cress) protein is Pentatricopeptide repeat-containing protein At3g18110, chloroplastic (EMB1270).